The following is a 122-amino-acid chain: UPF0102 protein xcc-b100_3645 (122 aa).

Belongs to the UPF0102 family.

The chain is UPF0102 protein xcc-b100_3645 from Xanthomonas campestris pv. campestris (strain B100).